The sequence spans 1892 residues: Sodium channel protein type 4 subunit alpha A (1892 aa).

The Cytoplasmic portion of the chain corresponds to 1-125 (MATILPPPGT…RGAIKILIHS (125 aa)). The segment at 34-54 (APKAGAHEEEEPPTPNPDLEA) is disordered. The stretch at 107–433 (ILSPFSLVRR…VVAMAYDEQN (327 aa)) is one I repeat. A helical transmembrane segment spans residues 126–144 (LFSTLIMITILSNCVFMTM). At 145–151 (SNPPAWS) the chain is on the extracellular side. A helical transmembrane segment spans residues 152–172 (KTVEYVFTGIYTFEATVKVLS). At 173 to 186 (RGFCVGPFTFLRDP) the chain is on the cytoplasmic side. The chain crosses the membrane as a helical span at residues 187–204 (WNWLDFMVISMAYITEFV). Over 205-210 (DLGNVS) the chain is Extracellular. N-linked (GlcNAc...) asparagine glycosylation occurs at N208. A helical transmembrane segment spans residues 211 to 227 (ALRTFRVLRALKTITVI). Residues 228 to 246 (PGLKTIVAALIQSVKKMVD) are Cytoplasmic-facing. Residues 247–266 (VMILTVFALAVFALVGLQLF) traverse the membrane as a helical segment. Topologically, residues 267–370 (MGNLRHKCIR…PNYGYTSFDS (104 aa)) are extracellular. A disulfide bridge links C274 with C339. N-linked (GlcNAc...) asparagine glycans are attached at residues N281, N294, and N341. C348 and C354 are oxidised to a cystine. The pore-forming intramembrane region spans 371 to 395 (FGWAFLALFRLMTQDNWESLFQLTL). Over 396–402 (RAAGQTY) the chain is Extracellular. A helical transmembrane segment spans residues 403–423 (MLFFVVVIFLGSFYLINLILA). Over 424–612 (VVAMAYDEQN…KWVHFVVMDP (189 aa)) the chain is Cytoplasmic. An II repeat occupies 594 to 866 (CCEKWVVFKK…QIAIGRITRG (273 aa)). Residues 613 to 631 (FVDLAITICIVLNTLFMAM) traverse the membrane as a helical segment. Topologically, residues 632 to 642 (EHYPMTEEFDY) are extracellular. Residues 643-662 (MLSVGNLVFTGIFAAEMFFK) form a helical membrane-spanning segment. The Cytoplasmic segment spans residues 663-676 (LIAMDPYYYFQVGW). Residues 677 to 696 (NIFDSIIVTLSLVELGLANV) traverse the membrane as a helical segment. Residues 697–698 (QG) are Extracellular-facing. A helical membrane pass occupies residues 699–716 (LSVLRSFRLLRVFKLAKS). Topologically, residues 717 to 732 (WPTLNMLIKIIGNSVG) are cytoplasmic. The helical transmembrane segment at 733 to 751 (ALGNLTLVLAIIVFIFAVV) threads the bilayer. At 752 to 780 (GMQLFGKSYKDCVCKISSDCELPRWHMND) the chain is on the extracellular side. A disulfide bridge connects residues C765 and C771. Residues 781–801 (FFHSFLIVFRILCGEWIETMW) constitute an intramembrane region (pore-forming). The Extracellular portion of the chain corresponds to 802-812 (DCMEVAGAGMC). A disulfide bridge connects residues C803 and C812. The chain crosses the membrane as a helical span at residues 813 to 831 (LVVFMMVMVIGNLVVLNLF). At 832–1071 (LALLLSSFSG…TCFTIVEHDW (240 aa)) the chain is on the cytoplasmic side. 2 disordered regions span residues 884–905 (REPQKPAEEDPADEGEGKTEGM) and 945–982 (LGESDSENPSEDDDDQEDDVDSEVTCEENEHHSDGVED). Residues 948–971 (SDSENPSEDDDDQEDDVDSEVTCE) show a composition bias toward acidic residues. An III repeat occupies 1052–1366 (KGKKWWNLRK…KKYYEAMKKL (315 aa)). A helical transmembrane segment spans residues 1072–1089 (FETFIIFMILLSSGALAF). Residues 1090–1102 (EDIYIERRRTVKI) are Extracellular-facing. The helical transmembrane segment at 1103–1121 (VLEFADKVFTFIFVIEMLL) threads the bilayer. Residues 1122-1135 (KWVAYGFKTYFTNA) are Cytoplasmic-facing. The chain crosses the membrane as a helical span at residues 1136–1154 (WCWLDFFIVDISLISLSAN). Over 1155–1162 (LMGFSDLG) the chain is Extracellular. Residues 1163–1181 (PIKSLRTLRALRPLRALSR) form a helical membrane-spanning segment. Residues 1182–1198 (FEGMRVVVNALIGAIPS) lie on the Cytoplasmic side of the membrane. A helical membrane pass occupies residues 1199 to 1218 (IFNVLLVCLIFWLIFSIMGV). Residues 1219-1270 (NLFAGKFYRCINTTTAELFPISVVNNKSDCVALQEATQEARWVNVKVNYDNV) lie on the Extracellular side of the membrane. An intrachain disulfide couples C1228 to C1248. 2 N-linked (GlcNAc...) asparagine glycosylation sites follow: N1230 and N1244. Residues 1271–1292 (AKGYLSLLQIATFKGWMDIMYP) constitute an intramembrane region (pore-forming). Over 1293–1309 (AVDSREVEEQPSYEINL) the chain is Extracellular. A helical transmembrane segment spans residues 1310-1331 (YMYIYFVIFIIFGSFFTLNLFI). Residues 1332-1394 (GVIIDNFNQQ…LVFDFISQQF (63 aa)) are Cytoplasmic-facing. Residues 1350 to 1352 (IFM) are important for rapid channel inactivation. One copy of the IV repeat lies at 1375–1673 (IPRPANLIQG…WEKFDTGGTQ (299 aa)). A helical membrane pass occupies residues 1395 to 1412 (FDIFIMVLICLNMVTMMV). At 1413–1423 (ETDDQSPAKED) the chain is on the extracellular side. Residues 1424–1442 (FLFKVNVAFIVVFTGECTL) form a helical membrane-spanning segment. Topologically, residues 1443 to 1454 (KLFALRHYFFTN) are cytoplasmic. Residues 1455–1472 (GWNIFDFIVVILSIAGTM) traverse the membrane as a helical segment. The Extracellular portion of the chain corresponds to 1473–1485 (LSDIIEKYFVSPT). The helical transmembrane segment at 1486–1502 (LFRVIRLARIGRILRLI) threads the bilayer. Residues 1503 to 1521 (KGARGIRTLLFALMMSLPA) are Cytoplasmic-facing. Residues 1522–1539 (LFNIGLLLFLIMFIFSIF) traverse the membrane as a helical segment. At 1540–1561 (GMSNFAYVKKEAGINDMFNFET) the chain is on the extracellular side. An intramembrane region (pore-forming) is located at residues 1562–1584 (FGSSIICLFQITTSAGWDTLLLP). Residues 1585-1614 (MLNKEPPDCDPAFENPGTDVKGNCGNPMMG) lie on the Extracellular side of the membrane. C1593 and C1608 are disulfide-bonded. Residues 1615-1637 (MVFFCSYIIISFLVVVNMYIAII) traverse the membrane as a helical segment. Residues 1638–1892 (LENFNVAQEE…TQTILRETNV (255 aa)) lie on the Cytoplasmic side of the membrane. Positions 1767-1796 (EDMAAVVIQRAYRNHLHKRGIHHAAYIQRS) constitute an IQ domain. The interval 1836–1856 (RRRPDPQTRCSGARCSPEPPE) is disordered.

This sequence belongs to the sodium channel (TC 1.A.1.10) family. Nav1.4/SCN4A subfamily. As to quaternary structure, voltage-gated sodium (Nav) channels consist of an ion-conducting alpha subunit which is functional on its own associated with regulatory beta subunits.

It is found in the cell membrane. It catalyses the reaction Na(+)(in) = Na(+)(out). Its function is as follows. Pore-forming subunit of a voltage-gated sodium (Nav) channel that directly mediates the depolarizing phase of action potentials in excitable membranes. Navs, also called VGSCs (voltage-gated sodium channels) or VDSCs (voltage-dependent sodium channels), operate by switching between closed and open conformations depending on the voltage difference across the membrane. In the open conformation they allow Na(+) ions to selectively pass through the pore, along their electrochemical gradient. The influx of Na+ ions provokes membrane depolarization, initiating the propagation of electrical signals throughout cells and tissues. The sequence is that of Sodium channel protein type 4 subunit alpha A (scn4aa) from Takifugu rubripes (Japanese pufferfish).